A 388-amino-acid polypeptide reads, in one-letter code: Succinate--CoA ligase [ADP-forming] subunit beta (388 aa).

The ATP-grasp domain maps to 9 to 244 (KEILRKYGVT…LDEEDPAEIE (236 aa)). Residues K46, 53-55 (GRG), E99, A102, and E107 contribute to the ATP site. Mg(2+) contacts are provided by N199 and D213. Residues N264 and 321-323 (GIM) each bind substrate.

It belongs to the succinate/malate CoA ligase beta subunit family. As to quaternary structure, heterotetramer of two alpha and two beta subunits. The cofactor is Mg(2+).

The enzyme catalyses succinate + ATP + CoA = succinyl-CoA + ADP + phosphate. It catalyses the reaction GTP + succinate + CoA = succinyl-CoA + GDP + phosphate. It functions in the pathway carbohydrate metabolism; tricarboxylic acid cycle; succinate from succinyl-CoA (ligase route): step 1/1. Its function is as follows. Succinyl-CoA synthetase functions in the citric acid cycle (TCA), coupling the hydrolysis of succinyl-CoA to the synthesis of either ATP or GTP and thus represents the only step of substrate-level phosphorylation in the TCA. The beta subunit provides nucleotide specificity of the enzyme and binds the substrate succinate, while the binding sites for coenzyme A and phosphate are found in the alpha subunit. This is Succinate--CoA ligase [ADP-forming] subunit beta from Herminiimonas arsenicoxydans.